Reading from the N-terminus, the 705-residue chain is Putative membrane protein SCO6666 (705 aa).

13 helical membrane-spanning segments follow: residues 16-36 (VMLL…GVFG), 144-164 (LHGI…PLLG), 177-197 (NAEL…FGGL), 201-221 (GLPL…LFGF), 232-252 (IQVT…LMLV), 280-300 (LFSG…PSTF), 306-326 (LAVA…LPAL), 360-380 (VAVL…VTGM), 504-524 (ALTV…SVLL), 528-548 (TVAT…WVFQ), 561-581 (LGAL…GLAM), 615-635 (VVTC…TGGF), and 636-656 (SPIL…ATVV).

The protein belongs to the resistance-nodulation-cell division (RND) (TC 2.A.6) family. MmpL subfamily.

It is found in the cell membrane. The polypeptide is Putative membrane protein SCO6666 (Streptomyces coelicolor (strain ATCC BAA-471 / A3(2) / M145)).